The following is a 490-amino-acid chain: Glucose-6-phosphate 1-dehydrogenase (490 aa).

NADP(+) is bound by residues arginine 49, 91–92, and lysine 146; that span reads DV. Substrate is bound by residues histidine 176, lysine 180, glutamate 214, and aspartate 233. Catalysis depends on histidine 238, which acts as the Proton acceptor. Substrate contacts are provided by lysine 338 and lysine 343.

The protein belongs to the glucose-6-phosphate dehydrogenase family.

It carries out the reaction D-glucose 6-phosphate + NADP(+) = 6-phospho-D-glucono-1,5-lactone + NADPH + H(+). The protein operates within carbohydrate degradation; pentose phosphate pathway; D-ribulose 5-phosphate from D-glucose 6-phosphate (oxidative stage): step 1/3. In terms of biological role, catalyzes the oxidation of glucose 6-phosphate to 6-phosphogluconolactone. The chain is Glucose-6-phosphate 1-dehydrogenase from Buchnera aphidicola subsp. Schizaphis graminum (strain Sg).